Here is a 302-residue protein sequence, read N- to C-terminus: Acetylxylan esterase (302 aa).

The signal sequence occupies residues 1–20 (MPSVKETLTLLLSQAFLATG). Residues 21 to 31 (SPVDGETVVKR) constitute a propeptide that is removed on maturation. Gln32 bears the Pyrrolidone carboxylic acid mark. A glycan (N-linked (GlcNAc...) asparagine) is linked at Asn94. Ser121 is a catalytic residue. The segment at 236-273 (QLSSGGSQPPGGGPTSTSRPTSTRTGSSPGPTQTHWGQ) is disordered. A linker region spans residues 244 to 266 (PPGGGPTSTSRPTSTRTGSSPGP). Low complexity predominate over residues 250-269 (TSTSRPTSTRTGSSPGPTQT). Positions 266–302 (PTQTHWGQCGGQGWTGPTQCESGTTCQVISQWYSQCL) constitute a CBM1 domain. Cystine bridges form between Cys274/Cys291 and Cys285/Cys301.

It belongs to the cutinase family. Acetylxylan esterase subfamily. Monomer. Glycosylated.

It localises to the secreted. The catalysed reaction is Deacetylation of xylans and xylo-oligosaccharides.. Its pathway is glycan degradation; xylan degradation. Inhibited by phenylmethylsulfonyl flouride. Functionally, degrades acetylated xylans by cleaving acetyl side groups from the hetero-xylan backbone. The chain is Acetylxylan esterase (axe1) from Hypocrea jecorina (Trichoderma reesei).